Here is a 530-residue protein sequence, read N- to C-terminus: Amidase FVEG_08295 (530 aa).

Residues lysine 138 and serine 214 each act as charge relay system in the active site. Substrate-binding positions include serine 214 and 235–238 (IAGS). Serine 238 acts as the Acyl-ester intermediate in catalysis.

Belongs to the amidase family.

It carries out the reaction a monocarboxylic acid amide + H2O = a monocarboxylate + NH4(+). It functions in the pathway xenobiotic degradation. Functionally, amidase; part of the Fusarium detoxification of benzoxazolinone cluster 1 (FDB1) involved in the degradation of benzoxazolinones produced by the host plant. Maize, wheat, and rye produce the 2 benzoxazinone phytoanticipins 2,4-dihy-droxy-7-methoxy-1,4-benzoxazin-3-one (DIMBOA) and 2,4-dihydroxy-1,4-benzoxazin-3-one (DIBOA) that, due to their inherent instability once released, spontaneously degrade to the more stable corresponding benzoxazolinones, 6-methoxy-2-benzoxazolinone (MBOA) and 2-benzoxazolinone (BOA), respectively. The first step in the detoxification of benzoxazolinones involves the hydrolysis of the cyclic ester bond of benzoxazolinones by the FDB1 cluster gamma-lactamase MBL1 to aminophenols. MBL1 is able to convert BOA into 2-aminophenol (2-AP), as well as MBOA into 5-methoxy-2-aminophenol (2-AMP). The FDB2 cluster N-malonyltransferase FDB2/NAT1 then metabolizes aminophenols via N-malonylation to non-toxic malonamic acids. FDB2/NAT1 converts 2-AP into N-(2-hydroxyphenyl) malonamic acid (HPMA) and 2-AMP into N-(2-hydroxy-4-methoxyphenyl) malonamic acid (HMPMA). The duplicated dienlactone hydrolases DLH1 and DLH2 may provide redundant function for hydrolyzing the lactone moiety in the BOA molecule. The roles of the amidases an other enzymes encoded by the 2 FDB clusters have not been identified so far. This Gibberella moniliformis (strain M3125 / FGSC 7600) (Maize ear and stalk rot fungus) protein is Amidase FVEG_08295.